A 286-amino-acid chain; its full sequence is Aspartate/glutamate leucyltransferase (286 aa).

Belongs to the R-transferase family. Bpt subfamily.

It localises to the cytoplasm. It carries out the reaction N-terminal L-glutamyl-[protein] + L-leucyl-tRNA(Leu) = N-terminal L-leucyl-L-glutamyl-[protein] + tRNA(Leu) + H(+). The enzyme catalyses N-terminal L-aspartyl-[protein] + L-leucyl-tRNA(Leu) = N-terminal L-leucyl-L-aspartyl-[protein] + tRNA(Leu) + H(+). Functionally, functions in the N-end rule pathway of protein degradation where it conjugates Leu from its aminoacyl-tRNA to the N-termini of proteins containing an N-terminal aspartate or glutamate. The sequence is that of Aspartate/glutamate leucyltransferase from Jannaschia sp. (strain CCS1).